We begin with the raw amino-acid sequence, 321 residues long: Methionyl-tRNA formyltransferase (321 aa).

112-115 contributes to the (6S)-5,6,7,8-tetrahydrofolate binding site; sequence GLLP.

Belongs to the Fmt family.

It catalyses the reaction L-methionyl-tRNA(fMet) + (6R)-10-formyltetrahydrofolate = N-formyl-L-methionyl-tRNA(fMet) + (6S)-5,6,7,8-tetrahydrofolate + H(+). Its function is as follows. Attaches a formyl group to the free amino group of methionyl-tRNA(fMet). The formyl group appears to play a dual role in the initiator identity of N-formylmethionyl-tRNA by promoting its recognition by IF2 and preventing the misappropriation of this tRNA by the elongation apparatus. The sequence is that of Methionyl-tRNA formyltransferase from Chlamydia caviae (strain ATCC VR-813 / DSM 19441 / 03DC25 / GPIC) (Chlamydophila caviae).